The sequence spans 435 residues: Ribosomal protein uS12 methylthiotransferase RimO (435 aa).

An MTTase N-terminal domain is found at 3-113 (HKVGFVSLGC…VVNAVHQHLP (111 aa)). Positions 12, 48, 77, 144, 148, and 151 each coordinate [4Fe-4S] cluster. Residues 130 to 367 (LTPRHYAYLK…MQVQAEISRN (238 aa)) form the Radical SAM core domain. The TRAM domain occupies 370–435 (KNKIGSTQTV…DDYDLYASLV (66 aa)).

Belongs to the methylthiotransferase family. RimO subfamily. The cofactor is [4Fe-4S] cluster.

The protein resides in the cytoplasm. The catalysed reaction is L-aspartate(89)-[ribosomal protein uS12]-hydrogen + (sulfur carrier)-SH + AH2 + 2 S-adenosyl-L-methionine = 3-methylsulfanyl-L-aspartate(89)-[ribosomal protein uS12]-hydrogen + (sulfur carrier)-H + 5'-deoxyadenosine + L-methionine + A + S-adenosyl-L-homocysteine + 2 H(+). Catalyzes the methylthiolation of an aspartic acid residue of ribosomal protein uS12. This is Ribosomal protein uS12 methylthiotransferase RimO from Legionella pneumophila (strain Lens).